The primary structure comprises 647 residues: Probable inactive receptor kinase RLK902 (647 aa).

An N-terminal signal peptide occupies residues 1–29; that stretch reads MRLFFTPSMSNLSIFFSILLLSLPLPSIG. LRR repeat units follow at residues 69–93, 94–118, 119–142, 144–165, and 166–192; these read GGRVTALRLPGETLSGHIPEGIFGN, LTQLRTLSLRLNGLTGSLPLDLGSC, SDLRRLYLQGNRFSGEIPEVLFSL, NLVRLNLAENEFSGEISSGFKN, and LTRLKTLYLENNKLSGSLLDLDLSLDQ. The helical transmembrane segment at 268–288 threads the bilayer; the sequence is GIVIGCVVGLSLIVMILMVLF. Positions 365–639 constitute a Protein kinase domain; that stretch reads RASAEVLGKG…EVVRRIQELR (275 aa). Residue serine 367 is modified to Phosphoserine. An ATP-binding site is contributed by 371-379; it reads LGKGTFGTA. Phosphothreonine is present on threonine 388. ATP is bound at residue lysine 393. At serine 444 the chain carries Phosphoserine. Threonine 520 carries the post-translational modification Phosphothreonine. At serine 540 the chain carries Phosphoserine. Threonine 618 is subject to Phosphothreonine.

It belongs to the protein kinase superfamily. Ser/Thr protein kinase family. Interacts with At3g17950, At3g27210 and At5g05190. Autophosphorylation. As to expression, expressed in root tips, lateral root primordia, stipules, and floral organ abscission zones.

Its subcellular location is the cell membrane. The polypeptide is Probable inactive receptor kinase RLK902 (RLK902) (Arabidopsis thaliana (Mouse-ear cress)).